Reading from the N-terminus, the 314-residue chain is 4-hydroxy-3-methylbut-2-enyl diphosphate reductase (314 aa).

Cys-12 is a binding site for [4Fe-4S] cluster. Residues His-41 and His-74 each coordinate (2E)-4-hydroxy-3-methylbut-2-enyl diphosphate. Residues His-41 and His-74 each coordinate dimethylallyl diphosphate. Isopentenyl diphosphate is bound by residues His-41 and His-74. A [4Fe-4S] cluster-binding site is contributed by Cys-96. A (2E)-4-hydroxy-3-methylbut-2-enyl diphosphate-binding site is contributed by His-124. His-124 serves as a coordination point for dimethylallyl diphosphate. His-124 is an isopentenyl diphosphate binding site. Glu-126 serves as the catalytic Proton donor. Position 167 (Thr-167) interacts with (2E)-4-hydroxy-3-methylbut-2-enyl diphosphate. Position 197 (Cys-197) interacts with [4Fe-4S] cluster. Positions 225, 226, 227, and 269 each coordinate (2E)-4-hydroxy-3-methylbut-2-enyl diphosphate. Ser-225, Ser-226, Asn-227, and Ser-269 together coordinate dimethylallyl diphosphate. Isopentenyl diphosphate is bound by residues Ser-225, Ser-226, Asn-227, and Ser-269.

The protein belongs to the IspH family. The cofactor is [4Fe-4S] cluster.

The catalysed reaction is isopentenyl diphosphate + 2 oxidized [2Fe-2S]-[ferredoxin] + H2O = (2E)-4-hydroxy-3-methylbut-2-enyl diphosphate + 2 reduced [2Fe-2S]-[ferredoxin] + 2 H(+). It catalyses the reaction dimethylallyl diphosphate + 2 oxidized [2Fe-2S]-[ferredoxin] + H2O = (2E)-4-hydroxy-3-methylbut-2-enyl diphosphate + 2 reduced [2Fe-2S]-[ferredoxin] + 2 H(+). The protein operates within isoprenoid biosynthesis; dimethylallyl diphosphate biosynthesis; dimethylallyl diphosphate from (2E)-4-hydroxy-3-methylbutenyl diphosphate: step 1/1. It participates in isoprenoid biosynthesis; isopentenyl diphosphate biosynthesis via DXP pathway; isopentenyl diphosphate from 1-deoxy-D-xylulose 5-phosphate: step 6/6. Functionally, catalyzes the conversion of 1-hydroxy-2-methyl-2-(E)-butenyl 4-diphosphate (HMBPP) into a mixture of isopentenyl diphosphate (IPP) and dimethylallyl diphosphate (DMAPP). Acts in the terminal step of the DOXP/MEP pathway for isoprenoid precursor biosynthesis. In Idiomarina loihiensis (strain ATCC BAA-735 / DSM 15497 / L2-TR), this protein is 4-hydroxy-3-methylbut-2-enyl diphosphate reductase.